The primary structure comprises 148 residues: MLTFTQLKPPNGDATVTFTLALTAEERTRSRHRFETEDGKVVFLHLPRGTVLHDGDILLEETHNSLIRIIAKPELVVTAFAQTPLLLLRAAYHLGNRHVPVEITPTYLRFSSDSVLRAMLEQLGLEVKEEILPFQPELGAYGQHHHAH.

It belongs to the UreE family.

It localises to the cytoplasm. In terms of biological role, involved in urease metallocenter assembly. Binds nickel. Probably functions as a nickel donor during metallocenter assembly. In Nostoc punctiforme (strain ATCC 29133 / PCC 73102), this protein is Urease accessory protein UreE.